A 399-amino-acid chain; its full sequence is Serine palmitoyltransferase (399 aa).

Pyridoxal 5'-phosphate is bound by residues 113–114 (GF), His-213, Thr-241, and Ser-243. Lys-244 is subject to N6-(pyridoxal phosphate)lysine.

Belongs to the class-II pyridoxal-phosphate-dependent aminotransferase family. As to quaternary structure, homodimer. Pyridoxal 5'-phosphate is required as a cofactor.

The protein localises to the cytoplasm. It localises to the cell inner membrane. The catalysed reaction is L-serine + hexadecanoyl-CoA + H(+) = 3-oxosphinganine + CO2 + CoA. It functions in the pathway lipid metabolism; sphingolipid metabolism. Its function is as follows. Catalyzes the condensation of L-serine with palmitoyl-CoA (hexadecanoyl-CoA) to produce 3-oxosphinganine. Exhibits a broad substrate specificity concerning the chain length and the degree of unsaturation of acyl-CoA. This chain is Serine palmitoyltransferase, found in Sphingobacterium multivorum.